Reading from the N-terminus, the 926-residue chain is Alpha-aminoadipic semialdehyde synthase, mitochondrial (926 aa).

A mitochondrion-targeting transit peptide spans 1–27 (MLQVHRTGLGRLGVSLSKGLHHKAVLA). Residues 28 to 476 (VRREDVNAWE…ESRERAQSLS (449 aa)) are lysine-ketoglutarate reductase. Residues K48 and K56 each carry the N6-acetyllysine modification. K93 carries the N6-acetyllysine; alternate modification. An N6-succinyllysine; alternate modification is found at K93. K128 carries the post-translational modification N6-acetyllysine. Position 138 is an N6-acetyllysine; alternate (K138). K138 is subject to N6-succinyllysine; alternate. N6-succinyllysine is present on K274. Residue K286 is modified to N6-acetyllysine; alternate. Residue K286 is modified to N6-succinyllysine; alternate. An N6-succinyllysine modification is found at K333. K458 carries the post-translational modification N6-acetyllysine; alternate. K458 is subject to N6-succinyllysine; alternate. Positions 477–926 (MGTRRKVLVL…IYTTQSTIKP (450 aa)) are saccharopine dehydrogenase. S488, D512, and Q516 together coordinate NAD(+). At K523 the chain carries N6-acetyllysine; alternate. K523 bears the N6-succinyllysine; alternate mark. I533 lines the NAD(+) pocket. K535 bears the N6-acetyllysine; alternate mark. K535 is modified (N6-succinyllysine; alternate). The NAD(+) site is built by L554, A576, and S577. An L-saccharopine-binding site is contributed by 577–578 (SY). An N6-acetyllysine; alternate modification is found at K584. K584 carries the post-translational modification N6-succinyllysine; alternate. The NAD(+) site is built by L603, D604, and P605. D604 lines the L-saccharopine pocket. R703 contributes to the L-saccharopine binding site. K707 is subject to N6-acetyllysine. 724-726 (TLR) serves as a coordination point for L-saccharopine. The residue at position 732 (K732) is an N6-succinyllysine. Position 739 is an N6-acetyllysine (K739). K761 carries the post-translational modification N6-acetyllysine; alternate. K761 carries the N6-succinyllysine; alternate modification. K780 carries the post-translational modification N6-acetyllysine.

In the N-terminal section; belongs to the AlaDH/PNT family. It in the C-terminal section; belongs to the saccharopine dehydrogenase family. As to quaternary structure, homotetramer. Expressed in all 16 tissues examined with highest expression in the liver.

It localises to the mitochondrion. It carries out the reaction L-saccharopine + NADP(+) + H2O = L-lysine + 2-oxoglutarate + NADPH + H(+). The catalysed reaction is L-saccharopine + NAD(+) + H2O = (S)-2-amino-6-oxohexanoate + L-glutamate + NADH + H(+). It functions in the pathway amino-acid degradation; L-lysine degradation via saccharopine pathway; glutaryl-CoA from L-lysine: step 1/6. The protein operates within amino-acid degradation; L-lysine degradation via saccharopine pathway; glutaryl-CoA from L-lysine: step 2/6. Bifunctional enzyme that catalyzes the first two steps in lysine degradation. The chain is Alpha-aminoadipic semialdehyde synthase, mitochondrial from Homo sapiens (Human).